The sequence spans 351 residues: LETM1 domain-containing protein 1 (351 aa).

Over 1-130 (MLSGMALCRT…FRRDIIKAAP (130 aa)) the chain is Cytoplasmic. A helical transmembrane segment spans residues 131–151 (VVIISIPPFANYLVFVLMYFF). Topologically, residues 152–351 (PRQLLIRHFW…SANYLQSIKQ (200 aa)) are mitochondrial intermembrane. Positions 172–351 (IYHRMRVEAY…SANYLQSIKQ (180 aa)) constitute a Letm1 RBD domain.

Its subcellular location is the mitochondrion outer membrane. The protein localises to the nucleus. The protein resides in the mitochondrion inner membrane. May play an essential role for mitochondrial structure and function. The polypeptide is LETM1 domain-containing protein 1 (Xenopus tropicalis (Western clawed frog)).